The primary structure comprises 429 residues: Arsenical pump membrane protein (429 aa).

The Cytoplasmic segment spans residues 1–20 (MLLAGAIFVLTIVLVIWQPK). The helical transmembrane segment at 21–41 (GLGIGWSATLGAVLALVTGVV) threads the bilayer. Residues 42–45 (HPGD) are Periplasmic-facing. A helical membrane pass occupies residues 46 to 66 (IPVVWNIVWNATAAFIAVIII). The Cytoplasmic segment spans residues 67 to 97 (SLLLDESGFFEWAALHVSRWGNGRGRLLFTW). A helical membrane pass occupies residues 98 to 118 (IVLLGAAVAALFANDGAALIL). Over 119 to 120 (TP) the chain is Periplasmic. The helical transmembrane segment at 121-141 (IVIAMLLALGFSKGTTLAFVM) threads the bilayer. The Cytoplasmic segment spans residues 142–151 (AAGFIADTAS). Residues 152-172 (LPLIVSNLVNIVSADFFGLGF) traverse the membrane as a helical segment. Topologically, residues 173-177 (REYAS) are periplasmic. Residues 178 to 198 (VMVPVDIAAIVATLVMLHLYF) form a helical membrane-spanning segment. The Cytoplasmic segment spans residues 199–227 (RKDIPQNYDMALLKSPAEAIKDPATFKTG). The next 2 membrane-spanning stretches (helical) occupy residues 228–248 (WVVLLLLLVGFFVLEPLGIPV) and 249–269 (SAIAAVGALILFVVAKRGHAI). At 270 to 273 (NTGK) the chain is on the cytoplasmic side. A helical membrane pass occupies residues 274 to 294 (VLRGAPWQIVIFSLGMYLVVY). Residues 295–310 (GLRNAGLTEYLSGVLN) are Periplasmic-facing. A helical transmembrane segment spans residues 311 to 331 (VLADNGLWAATLGTGFLTAFL). Over 332 to 406 (SSIMNNMPTV…ISWGYYFRTG (75 aa)) the chain is Cytoplasmic. Residues 407–427 (IIMTLPVLFVTLAALALRLSF) form a helical membrane-spanning segment. Residues 428–429 (TL) are Periplasmic-facing.

The protein belongs to the ArsB family.

The protein resides in the cell inner membrane. Its function is as follows. Involved in arsenical resistance. Thought to form the channel of an arsenite pump. In Shigella flexneri, this protein is Arsenical pump membrane protein (arsB).